A 595-amino-acid chain; its full sequence is Elongation factor 4 (595 aa).

In terms of domain architecture, tr-type G spans 2-183; it reads KNIRNFCIIA…TIVEKVPAPK (182 aa). GTP is bound by residues 14-19 and 130-133; these read DHGKST and NKID.

Belongs to the TRAFAC class translation factor GTPase superfamily. Classic translation factor GTPase family. LepA subfamily.

The protein localises to the cell inner membrane. The enzyme catalyses GTP + H2O = GDP + phosphate + H(+). Required for accurate and efficient protein synthesis under certain stress conditions. May act as a fidelity factor of the translation reaction, by catalyzing a one-codon backward translocation of tRNAs on improperly translocated ribosomes. Back-translocation proceeds from a post-translocation (POST) complex to a pre-translocation (PRE) complex, thus giving elongation factor G a second chance to translocate the tRNAs correctly. Binds to ribosomes in a GTP-dependent manner. The chain is Elongation factor 4 from Parabacteroides distasonis (strain ATCC 8503 / DSM 20701 / CIP 104284 / JCM 5825 / NCTC 11152).